A 397-amino-acid chain; its full sequence is Riboflavin biosynthesis protein RibBA (397 aa).

The DHBP synthase stretch occupies residues 1–199 (MFHRIEEALE…IEDLIAYRRH (199 aa)). Residues 26-27 (RE), Asp-31, 138-142 (RAGHT), and Glu-162 each bind D-ribulose 5-phosphate. A Mg(2+)-binding site is contributed by Glu-27. Position 141 (His-141) interacts with Mg(2+). The segment at 200-397 (HETFVTKEVE…VTKLGHLLNL (198 aa)) is GTP cyclohydrolase II. 250 to 254 (RVHSE) provides a ligand contact to GTP. Zn(2+)-binding residues include Cys-255, Cys-266, and Cys-268. GTP-binding positions include Gln-271, 293 to 295 (EGR), and Thr-315. The active-site Proton acceptor; for GTP cyclohydrolase activity is Asp-327. Arg-329 serves as the catalytic Nucleophile; for GTP cyclohydrolase activity. Thr-350 and Lys-355 together coordinate GTP.

It in the N-terminal section; belongs to the DHBP synthase family. In the C-terminal section; belongs to the GTP cyclohydrolase II family. It depends on Mg(2+) as a cofactor. Requires Mn(2+) as cofactor. Zn(2+) is required as a cofactor.

The enzyme catalyses D-ribulose 5-phosphate = (2S)-2-hydroxy-3-oxobutyl phosphate + formate + H(+). It catalyses the reaction GTP + 4 H2O = 2,5-diamino-6-hydroxy-4-(5-phosphoribosylamino)-pyrimidine + formate + 2 phosphate + 3 H(+). Its pathway is cofactor biosynthesis; riboflavin biosynthesis; 2-hydroxy-3-oxobutyl phosphate from D-ribulose 5-phosphate: step 1/1. It functions in the pathway cofactor biosynthesis; riboflavin biosynthesis; 5-amino-6-(D-ribitylamino)uracil from GTP: step 1/4. In terms of biological role, catalyzes the conversion of D-ribulose 5-phosphate to formate and 3,4-dihydroxy-2-butanone 4-phosphate. Catalyzes the conversion of GTP to 2,5-diamino-6-ribosylamino-4(3H)-pyrimidinone 5'-phosphate (DARP), formate and pyrophosphate. This Bacillus cytotoxicus (strain DSM 22905 / CIP 110041 / 391-98 / NVH 391-98) protein is Riboflavin biosynthesis protein RibBA.